We begin with the raw amino-acid sequence, 184 residues long: Large ribosomal subunit protein uL6 (184 aa).

Belongs to the universal ribosomal protein uL6 family. In terms of assembly, part of the 50S ribosomal subunit.

Functionally, this protein binds to the 23S rRNA, and is important in its secondary structure. It is located near the subunit interface in the base of the L7/L12 stalk, and near the tRNA binding site of the peptidyltransferase center. In Thermococcus gammatolerans (strain DSM 15229 / JCM 11827 / EJ3), this protein is Large ribosomal subunit protein uL6.